We begin with the raw amino-acid sequence, 357 residues long: Protein BIG GRAIN 1-like A (357 aa).

Disordered regions lie at residues 1–146 (MEIT…KELG) and 208–233 (SSTC…GKSK). Residues 75–87 (DFERSRRKTDFLR) are compositionally biased toward basic and acidic residues. 2 stretches are compositionally biased toward low complexity: residues 88-104 (HSNS…SSES) and 112-127 (KSSA…QPKP). A compositionally biased stretch (polar residues) spans 129–139 (RTSSVDHSSAV). Over residues 208–223 (SSTCSSASSFSRSCLS) the composition is skewed to low complexity.

It belongs to the BIG GRAIN 1 (BG1) plant protein family.

The protein resides in the cell membrane. Functionally, involved in auxin transport. Regulator of the auxin signaling pathway. The sequence is that of Protein BIG GRAIN 1-like A from Arabidopsis thaliana (Mouse-ear cress).